The sequence spans 78 residues: Large ribosomal subunit protein bL28 (78 aa).

The tract at residues 1–23 is disordered; the sequence is MSRVCQVSGKRVQTGNNVSHANN. Residues 11 to 22 show a composition bias toward polar residues; sequence RVQTGNNVSHAN.

It belongs to the bacterial ribosomal protein bL28 family.

In Xanthomonas campestris pv. campestris (strain 8004), this protein is Large ribosomal subunit protein bL28.